A 77-amino-acid chain; its full sequence is Liver-expressed antimicrobial peptide 2 (77 aa).

An N-terminal signal peptide occupies residues 1 to 22 (MWHLKLCAVLMIFLLLLGQIDG). Positions 23–37 (SPIPEVSSAKRRPRR) are excised as a propeptide. Cystine bridges form between Cys-54-Cys-65 and Cys-60-Cys-70.

It belongs to the LEAP2 family.

The protein localises to the secreted. Has an antimicrobial activity. The sequence is that of Liver-expressed antimicrobial peptide 2 (LEAP2) from Homo sapiens (Human).